We begin with the raw amino-acid sequence, 156 residues long: Small ribosomal subunit protein uS7 (156 aa).

This sequence belongs to the universal ribosomal protein uS7 family. As to quaternary structure, part of the 30S ribosomal subunit. Contacts proteins S9 and S11.

One of the primary rRNA binding proteins, it binds directly to 16S rRNA where it nucleates assembly of the head domain of the 30S subunit. Is located at the subunit interface close to the decoding center, probably blocks exit of the E-site tRNA. The protein is Small ribosomal subunit protein uS7 of Rhodopseudomonas palustris (strain BisB18).